The primary structure comprises 1166 residues: IQ domain-containing protein N (1166 aa).

A compositionally biased stretch (polar residues) spans 1–19 (MQPATQLQFTNHLSPNGQC). Residues 1–56 (MQPATQLQFTNHLSPNGQCILQPPPTPSLPDKMEKAPPQPQHEGLKSEEHLPQQPA) are disordered. The 30-residue stretch at 89–118 (HARAATLIQANWRGYRLRQKLISQMTAAKA) folds into the IQ 1 domain. 3 disordered regions span residues 431–450 (VCPGPAMAKTPPQTHPVATP), 769–797 (LSAPPWAKPEDRWTQPKPHGHVPGKTTQG), and 829–848 (DSGATRAQPSMPSQVVPCQE). 5 IQ domains span residues 907–932 (AVTTIQAGVRGYLVRRRIRVWHRRAT), 928–955 (HRRATVIQATWRGYRMRRNLAHLCRATT), 952–979 (RATTIIQAAWRGYSTRRDQARHRQMLHP), 1091–1119 (RDKAATAIQSAWRGFKIRQQMRQQQMAAK), and 1114–1143 (QQMAAKMVQATWRGHHTRSCLKSTEALLGP). The disordered stretch occupies residues 1145–1166 (DPWSSSQHMHWASSQHTHWPGI). The span at 1147–1166 (WSSSQHMHWASSQHTHWPGI) shows a compositional bias: polar residues.

Interacts with calmodulin.

Its function is as follows. Essential for spermiogenesis and fertilization. May be required for manchette assembly in elongating spermatids. The protein is IQ domain-containing protein N (IQCN) of Macaca fascicularis (Crab-eating macaque).